The primary structure comprises 198 residues: Ribonuclease HII (198 aa).

An RNase H type-2 domain is found at 14-198; that stretch reads GVIAGVDEVG…RNFAPISRAL (185 aa). 3 residues coordinate a divalent metal cation: Asp-20, Glu-21, and Asp-112.

It belongs to the RNase HII family. Mn(2+) is required as a cofactor. The cofactor is Mg(2+).

It localises to the cytoplasm. It catalyses the reaction Endonucleolytic cleavage to 5'-phosphomonoester.. Functionally, endonuclease that specifically degrades the RNA of RNA-DNA hybrids. The sequence is that of Ribonuclease HII from Wolbachia sp. subsp. Drosophila simulans (strain wRi).